The chain runs to 240 residues: MTTARYNRVVLKLSGEALSGDQGYGIDPKVIQSISKQVKEVADLGVEVAIVVGGGNIWRGKVGSEMGMDRASADYMGMLATIMNSLALQDGLETIDVETRVQTSIEMRQVAEPYIRRKAIRHLEKKRVVIFAAGTGNPYFSTDTTAALRAAEIEAEVILMAKNNVDGVYTDDPKLNKSAKKYESLTYLEMLNEGLGVMDSTASSLCMDNNIPLIVFSIMEEGNIKRVVQGETIGTTIRGK.

Residue 12–15 participates in ATP binding; it reads KLSG. The tract at residues 20–25 is involved in allosteric activation by GTP; the sequence is GDQGYG. Glycine 54 contributes to the UMP binding site. ATP-binding residues include glycine 55 and arginine 59. UMP is bound by residues aspartate 74 and 135–142; that span reads TGNPYFST. Residues asparagine 163, tyrosine 169, and aspartate 172 each coordinate ATP.

It belongs to the UMP kinase family. Homohexamer.

It is found in the cytoplasm. It carries out the reaction UMP + ATP = UDP + ADP. Its pathway is pyrimidine metabolism; CTP biosynthesis via de novo pathway; UDP from UMP (UMPK route): step 1/1. Allosterically activated by GTP. Inhibited by UTP. Catalyzes the reversible phosphorylation of UMP to UDP. The chain is Uridylate kinase from Oceanobacillus iheyensis (strain DSM 14371 / CIP 107618 / JCM 11309 / KCTC 3954 / HTE831).